The primary structure comprises 326 residues: Putative HTH-type transcriptional regulator y4qH (326 aa).

One can recognise an HTH luxR-type domain in the interval 257–322 (AVQKIPALSL…VAAIKAISLG (66 aa)). Positions 281 to 300 (SWDIGVIMRISENTVNFHIK) form a DNA-binding region, H-T-H motif.

This sequence belongs to the autoinducer-regulated transcriptional regulatory protein family.

The sequence is that of Putative HTH-type transcriptional regulator y4qH from Sinorhizobium fredii (strain NBRC 101917 / NGR234).